A 285-amino-acid chain; its full sequence is Small ribosomal subunit biogenesis GTPase RsgA (285 aa).

Residues 61 to 215 form the CP-type G domain; the sequence is KNQLIRPKVA…IIDSPGFSSF (155 aa). Residues 110–113 and 159–167 contribute to the GTP site; these read TKID and GQTGVGKTS. The Zn(2+) site is built by C239, C244, H246, and C254.

This sequence belongs to the TRAFAC class YlqF/YawG GTPase family. RsgA subfamily. In terms of assembly, monomer. Associates with 30S ribosomal subunit, binds 16S rRNA. It depends on Zn(2+) as a cofactor.

The protein resides in the cytoplasm. Its function is as follows. One of several proteins that assist in the late maturation steps of the functional core of the 30S ribosomal subunit. Helps release RbfA from mature subunits. May play a role in the assembly of ribosomal proteins into the subunit. Circularly permuted GTPase that catalyzes slow GTP hydrolysis, GTPase activity is stimulated by the 30S ribosomal subunit. In Mesomycoplasma hyopneumoniae (strain 7448) (Mycoplasma hyopneumoniae), this protein is Small ribosomal subunit biogenesis GTPase RsgA.